The following is a 698-amino-acid chain: Na(+)/H(+) antiporter NhaS5 (698 aa).

12 consecutive transmembrane segments (helical) span residues 10–30, 35–55, 65–85, 100–120, 121–141, 156–176, 184–204, 222–242, 275–295, 300–320, 333–353, and 370–390; these read SNPLIDFTILLLVTLILPPIF, LPGLVGLLFAGIVLGKSGLGV, LFTDIGKIYLMFVAGLEIDMV, LTFAVPLLTGLAVGLTFGYSF, NASVLLGSLFASHTLLGYPIV, IGATIFTDIAALLVLAICISI, AGLVVQLVAIAVYSALVLIGF, QFLFVLLAVFLASVGSELINV, LFIPFFFIGIGLLLDLPAFLV, LFPLVVAIVVGLILSKGVAAI, GLTMWSLSIPQVAATLAAAVA, and VLNTIIVLMLITSIVGPLMTA.

Belongs to the monovalent cation:proton antiporter 2 (CPA2) transporter (TC 2.A.37) family.

It is found in the membrane. Its function is as follows. Na(+)/H(+) antiporter. The polypeptide is Na(+)/H(+) antiporter NhaS5 (nhaS5) (Synechocystis sp. (strain ATCC 27184 / PCC 6803 / Kazusa)).